We begin with the raw amino-acid sequence, 767 residues long: Syn-copalyl diphosphate synthase, chloroplastic (767 aa).

A chloroplast-targeting transit peptide spans 1-47 (MPVFTASFQCVTLFGQPASAADAQPLLQGQRPFLHLHARRRRPCGPM). The interval 45–74 (GPMLISKSPPYPASEETREWEADGQHEHTD) is disordered. A compositionally biased stretch (basic and acidic residues) spans 59–74 (EETREWEADGQHEHTD). Position 233 (lysine 233) interacts with substrate. Mg(2+) contacts are provided by aspartate 365 and aspartate 367. The short motif at 365 to 368 (DIDD) is the DXDD motif element. Substrate is bound at residue lysine 453.

Belongs to the terpene synthase family. The cofactor is Mg(2+).

The protein resides in the plastid. Its subcellular location is the chloroplast. The enzyme catalyses (2E,6E,10E)-geranylgeranyl diphosphate = 9alpha-copalyl diphosphate. In terms of biological role, catalyzes the conversion of geranylgeranyl diphosphate to the phytoalexin precursor syn-copalyl diphosphate. Required for the biosynthesis of momilactones that exude from roots and act as allelochemicals against lowland weeds in paddy soil. The sequence is that of Syn-copalyl diphosphate synthase, chloroplastic from Oryza sativa subsp. japonica (Rice).